The following is a 115-amino-acid chain: NADH-ubiquinone oxidoreductase chain 3 (115 aa).

Transmembrane regions (helical) follow at residues 5–25 (TALLVNITLSMLLIIVAFWFF), 55–75 (FFLVAITFLLFDLEIALLLPL), and 86–106 (IMMLTAFILISVLALGLAYEW).

Belongs to the complex I subunit 3 family. As to quaternary structure, core subunit of respiratory chain NADH dehydrogenase (Complex I) which is composed of 45 different subunits. Interacts with TMEM186. Interacts with TMEM242.

Its subcellular location is the mitochondrion inner membrane. The catalysed reaction is a ubiquinone + NADH + 5 H(+)(in) = a ubiquinol + NAD(+) + 4 H(+)(out). Its function is as follows. Core subunit of the mitochondrial membrane respiratory chain NADH dehydrogenase (Complex I) which catalyzes electron transfer from NADH through the respiratory chain, using ubiquinone as an electron acceptor. Essential for the catalytic activity of complex I. This is NADH-ubiquinone oxidoreductase chain 3 from Peromyscus sejugis (Santa Cruz mouse).